Consider the following 740-residue polypeptide: Eukaryotic translation initiation factor 3 subunit B (740 aa).

The span at 1-10 (MAPSFDTLSE) shows a compositional bias: polar residues. The tract at residues 1-20 (MAPSFDTLSEQDLHEEEEEE) is disordered. The RRM domain occupies 40 to 126 (TFVVIDGLPV…HTLLVNKLMD (87 aa)). 6 WD repeats span residues 193 to 230 (AHWT…KQKQ), 232 to 289 (PHPF…RSFV), 302 to 343 (EPKK…LLGK), 455 to 496 (SLKD…SFFA), 513 to 556 (IEKK…EKPE), and 571 to 609 (TEHY…HTFA). Residues 696–721 (AYGLPEEADDPKLAKDAAATTQEQGE) form a disordered region.

Belongs to the eIF-3 subunit B family. Component of the eukaryotic translation initiation factor 3 (eIF-3) complex.

Its subcellular location is the cytoplasm. Functionally, RNA-binding component of the eukaryotic translation initiation factor 3 (eIF-3) complex, which is involved in protein synthesis of a specialized repertoire of mRNAs and, together with other initiation factors, stimulates binding of mRNA and methionyl-tRNAi to the 40S ribosome. The eIF-3 complex specifically targets and initiates translation of a subset of mRNAs involved in cell proliferation. The sequence is that of Eukaryotic translation initiation factor 3 subunit B (prt1) from Aspergillus fumigatus (strain ATCC MYA-4609 / CBS 101355 / FGSC A1100 / Af293) (Neosartorya fumigata).